We begin with the raw amino-acid sequence, 373 residues long: MKGLFAFGLGLLSLVNALPQAQGGGAAASAKVSGTRFVIDGKTGYFAGTNSYWIGFLTNNRDVDTTLDHIASSGLKILRVWGFNDVNNQPSGNTVWFQRLASSGSQINTGPNGLQRLDYLVRSAETRGIKLIIALVNYWDDFGGMKAYVNAFGGTKESWYTNARAQEQYKRYIQAVVSRYVNSPAIFAWELANEPRCKGCNTNVIFNWATQISDYIRSLDKDHLITLGDEGFGLPGQTTYPYQYGEGTDFVKNLQIKNLDFGTFHMYPGHWGVPTSFGPGWIKDHAAACRAAGKPCLLEEYGYESDRCNVQKGWQQASRELSRDGMSGDLFWQWGDQLSTGQTHNDGFTIYYGSSLATCLVTDHVRAINALPA.

The first 17 residues, 1–17 (MKGLFAFGLGLLSLVNA), serve as a signal peptide directing secretion. Substrate is bound by residues Trp-81, Asn-193, and 194 to 196 (EPR). The active-site Proton donor/acceptor is Glu-194. Cys-197 and Cys-200 are joined by a disulfide. 3 residues coordinate substrate: Glu-230, Tyr-267, and Trp-271. A disulfide bond links Cys-289 and Cys-296. The active-site Nucleophile is the Glu-300. The cysteines at positions 308 and 359 are disulfide-linked. Trp-332 is a substrate binding site.

Belongs to the glycosyl hydrolase 5 (cellulase A) family. As to quaternary structure, monomer. In terms of processing, not glycosylated.

It localises to the secreted. The catalysed reaction is Random hydrolysis of (1-&gt;4)-beta-D-mannosidic linkages in mannans, galactomannans and glucomannans.. Functionally, endo-1,4-mannanase that catalyzes the random hydrolysis of (1-&gt;4)-beta-D-mannosidic linkages in mannans and heteromannans. It is a crucial enzyme for depolymerization of seed galactomannans and wood galactoglucomannans. Hydrolyzes structurally different mannan polysaccharides, such as galactomannans, glucomannans, and beta-1,4-mannans from different sources, yielding principally mannobiose. Also has transglycosylation activity. The chain is Mannan endo-1,4-beta-mannosidase A from Podospora anserina (strain S / ATCC MYA-4624 / DSM 980 / FGSC 10383) (Pleurage anserina).